A 144-amino-acid chain; its full sequence is Large ribosomal subunit protein uL15 (144 aa).

The tract at residues 1 to 51 (MELNSIKPGSGSKHAKRRVGRGIGSGLGKTAGRGHKGQKSRAGGYHKVGFE) is disordered. Gly residues predominate over residues 21–31 (RGIGSGLGKTA).

Belongs to the universal ribosomal protein uL15 family. In terms of assembly, part of the 50S ribosomal subunit.

Its function is as follows. Binds to the 23S rRNA. The protein is Large ribosomal subunit protein uL15 of Leptothrix cholodnii (strain ATCC 51168 / LMG 8142 / SP-6) (Leptothrix discophora (strain SP-6)).